The sequence spans 566 residues: Hemocyanin B chain (566 aa).

Residues Cys82 and Cys87 are joined by a disulfide bond. Cu cation-binding residues include His183, His187, His213, His309, His313, and His347.

This sequence belongs to the tyrosinase family. Hemocyanin subfamily. As to expression, hemolymph.

The protein resides in the secreted. The protein localises to the extracellular space. Hemocyanins are copper-containing oxygen carriers occurring freely dissolved in the hemolymph of many mollusks and arthropods. This chain is Hemocyanin B chain, found in Astacus leptodactylus (Turkish narrow-clawed crayfish).